Reading from the N-terminus, the 202-residue chain is dTTP/UTP pyrophosphatase (202 aa).

Asp76 acts as the Proton acceptor in catalysis.

The protein belongs to the Maf family. YhdE subfamily. The cofactor is a divalent metal cation.

The protein localises to the cytoplasm. The enzyme catalyses dTTP + H2O = dTMP + diphosphate + H(+). It catalyses the reaction UTP + H2O = UMP + diphosphate + H(+). Functionally, nucleoside triphosphate pyrophosphatase that hydrolyzes dTTP and UTP. May have a dual role in cell division arrest and in preventing the incorporation of modified nucleotides into cellular nucleic acids. This is dTTP/UTP pyrophosphatase from Neisseria gonorrhoeae (strain ATCC 700825 / FA 1090).